We begin with the raw amino-acid sequence, 620 residues long: Protein NRT1/ PTR FAMILY 2.13 (620 aa).

The disordered stretch occupies residues 1–32 (MVLEDRKDGSSLPGRSGSFSKSSPSELDVVDP). Residues 10-25 (SSLPGRSGSFSKSSPS) show a composition bias toward low complexity. Transmembrane regions (helical) follow at residues 70–90 (LGSIGLLANFMVYLTKVFHLE), 95–115 (ANVINIWSGFTNLTPLVGAYI), 126–146 (IAFASFATLLGLITITLTASF), 167–187 (KLQIGVLLLGLCFLSVGSGGI), 213–233 (FFNWYYMTFTVVLIITQTVVV), 241–261 (WIIGFSIPTGLMALAVVMFFA), 364–384 (IVPIWSAGIISLAAMTTQGTF), 402–422 (IPAGSLSVISLLTIGIFLPFY), 443–463 (LQRIGTGIVFAIFSMIVAGIV), 485–505 (VFWLSPQLILMGLCEAFNIIG), 524–544 (SLFSLSFAGSSYLSSFLVTVV), and 568–588 (YFYYLIAVLGVVNLVYFWYCA).

Belongs to the major facilitator superfamily. Proton-dependent oligopeptide transporter (POT/PTR) (TC 2.A.17) family. Interacts with NLA. Post-translationally, ubiquitinated by NLA. Ubiquitination of NPF2.13 leads to its degradation by the proteasome. As to expression, expressed in leaves and flowers. Detected in stems and siliques. Highest expression in the distal lamina of older leaves. Restricted to the sieve element and companion cell complex of the minor vein.

The protein resides in the cell membrane. Low-affinity proton-dependent nitrate transporter. Not involved in dipeptides transport, but has a weak glucosinolate transport activity. Involved in phloem loading and nitrate remobilization from the older leaves to other tissues. The protein is Protein NRT1/ PTR FAMILY 2.13 (NPF2.13) of Arabidopsis thaliana (Mouse-ear cress).